A 661-amino-acid chain; its full sequence is Zinc finger protein 81 (661 aa).

The region spanning Val-21–Ser-92 is the KRAB domain. Lys-266 is covalently cross-linked (Glycyl lysine isopeptide (Lys-Gly) (interchain with G-Cter in SUMO2)). 12 C2H2-type zinc fingers span residues Tyr-330–His-352, Tyr-358–His-380, Phe-386–His-408, His-414–His-436, Tyr-442–His-464, Tyr-470–His-492, Tyr-498–His-520, Tyr-526–His-548, Tyr-554–His-576, Tyr-582–His-604, Tyr-610–His-632, and Tyr-638–His-660.

The protein belongs to the krueppel C2H2-type zinc-finger protein family.

The protein localises to the nucleus. In terms of biological role, may be involved in transcriptional regulation. The polypeptide is Zinc finger protein 81 (ZNF81) (Homo sapiens (Human)).